The chain runs to 327 residues: MSPPAAIYEPTVAATGLKGKVVVSETAPVEGASQTKLLDHFGGKWDEFKFAPIRESQVSRAMTRRYFEDLDKYAESDVVIVGAGSCGLSTAYVLAKARPDLKIAIVEASVSPGGGAWLGGQLFSAMVMRRPAEVFLNELGVPYEEDANPNYVVVKHASLFTSTLMSKVLSFPNVKLFNATAVEDLITRPTENGNPQIAGVVVNWTLVTLHHDDHSCMDPNTINAPVIISTTGHDGPFGAFCAKRLVSMGSVDKLGGMRGLDMNSAEDAIVKNTREVTKGLIIGGMELSEIDGFNRMGPTFGAMVLSGVKAAEEALKVFDERQRECAE.

Substrate-binding positions include C86, 107–108, G115, and V182; that span reads EA. C216 carries the 2,3-didehydroalanine (Cys) modification. Residues D218, H233, M285, and 295-297 contribute to the substrate site; that span reads RMG.

This sequence belongs to the THI4 family. As to quaternary structure, homooctamer. Requires Fe cation as cofactor. In terms of processing, during the catalytic reaction, a sulfide is transferred from Cys-216 to a reaction intermediate, generating a dehydroalanine residue.

The protein resides in the cytoplasm. It localises to the nucleus. It carries out the reaction [ADP-thiazole synthase]-L-cysteine + glycine + NAD(+) = [ADP-thiazole synthase]-dehydroalanine + ADP-5-ethyl-4-methylthiazole-2-carboxylate + nicotinamide + 3 H2O + 2 H(+). Functionally, involved in biosynthesis of the thiamine precursor thiazole. Catalyzes the conversion of NAD and glycine to adenosine diphosphate 5-(2-hydroxyethyl)-4-methylthiazole-2-carboxylic acid (ADT), an adenylated thiazole intermediate. The reaction includes an iron-dependent sulfide transfer from a conserved cysteine residue of the protein to a thiazole intermediate. The enzyme can only undergo a single turnover, which suggests it is a suicide enzyme. May have additional roles in adaptation to various stress conditions and in DNA damage tolerance. The protein is Thiamine thiazole synthase of Aspergillus oryzae (strain ATCC 42149 / RIB 40) (Yellow koji mold).